A 318-amino-acid chain; its full sequence is Trans-prenyltransferase (318 aa).

Residues 1–21 (MLHLIYISIIVVLIIILISYT) form a helical membrane-spanning segment. K85, R88, and H122 together coordinate isopentenyl diphosphate. D129 and D135 together coordinate Mg(2+). R140 is a binding site for dimethylallyl diphosphate. Isopentenyl diphosphate is bound at residue R141. The dimethylallyl diphosphate site is built by K216, T217, and Q254.

The protein belongs to the FPP/GGPP synthase family. Asfivirus trans-prenyltransferase subfamily. The cofactor is Mg(2+).

It localises to the host endoplasmic reticulum. It is found in the host membrane. The catalysed reaction is isopentenyl diphosphate + dimethylallyl diphosphate = (2E)-geranyl diphosphate + diphosphate. The enzyme catalyses isopentenyl diphosphate + (2E)-geranyl diphosphate = (2E,6E)-farnesyl diphosphate + diphosphate. It carries out the reaction isopentenyl diphosphate + (2E,6E)-farnesyl diphosphate = (2E,6E,10E)-geranylgeranyl diphosphate + diphosphate. It catalyses the reaction isopentenyl diphosphate + (2E,6E,10E)-geranylgeranyl diphosphate = (2E,6E,10E,14E)-geranylfarnesyl diphosphate + diphosphate. It participates in isoprenoid biosynthesis; farnesyl diphosphate biosynthesis; farnesyl diphosphate from geranyl diphosphate and isopentenyl diphosphate: step 1/1. The protein operates within isoprenoid biosynthesis; geranyl diphosphate biosynthesis; geranyl diphosphate from dimethylallyl diphosphate and isopentenyl diphosphate: step 1/1. It functions in the pathway isoprenoid biosynthesis; geranylgeranyl diphosphate biosynthesis; geranylgeranyl diphosphate from farnesyl diphosphate and isopentenyl diphosphate: step 1/1. Its function is as follows. Trans-prenyltransferase that catalyzes the sequential condensation of isopentenyl diphosphate (IPP) with different allylic diphosphates, such as dimethylallyl diphosphate (DMAPP), geranyl diphosphate (GPP), farnesyl diphosphate (FPP) and geranylgeranyl diphosphate (GGPP), farnesyl diphosphate being the best allylic substrate. This African swine fever virus (isolate Tick/Malawi/Lil 20-1/1983) (ASFV) protein is Trans-prenyltransferase.